The sequence spans 133 residues: UPF0344 protein SE_0666 (133 aa).

Helical transmembrane passes span 1-21 (MLHV…ATYL), 42-62 (LFML…FMAA), 71-91 (MLLT…EISI), and 103-123 (FFWI…ILPW).

The protein belongs to the UPF0344 family.

It localises to the cell membrane. The protein is UPF0344 protein SE_0666 of Staphylococcus epidermidis (strain ATCC 12228 / FDA PCI 1200).